Consider the following 401-residue polypeptide: Elongation factor Tu (401 aa).

The tr-type G domain maps to 10–211 (KPHLNVGTIG…ALDTFVPNPK (202 aa)). The G1 stretch occupies residues 19 to 26 (GHVDHGKT). 19–26 (GHVDHGKT) is a GTP binding site. Residue T26 coordinates Mg(2+). Residues 62-66 (GITIA) form a G2 region. A G3 region spans residues 83-86 (DCPG). Residues 83–87 (DCPGH) and 138–141 (NKAD) contribute to the GTP site. The G4 stretch occupies residues 138–141 (NKAD). The tract at residues 179–181 (SAV) is G5.

It belongs to the TRAFAC class translation factor GTPase superfamily. Classic translation factor GTPase family. EF-Tu/EF-1A subfamily. In terms of assembly, monomer.

The protein resides in the cytoplasm. The catalysed reaction is GTP + H2O = GDP + phosphate + H(+). In terms of biological role, GTP hydrolase that promotes the GTP-dependent binding of aminoacyl-tRNA to the A-site of ribosomes during protein biosynthesis. The protein is Elongation factor Tu of Leptospira interrogans serogroup Icterohaemorrhagiae serovar copenhageni (strain Fiocruz L1-130).